A 371-amino-acid chain; its full sequence is MALETFVNSEPFTFGVELEIQIVNTHNYDLTKAASDLMRLIKDAKFPGNITPEITESMIELSTGICRTHDQALGELHAIRDTLVNAADQLNVGLCGGGTHAFQQWSERQIFDAPRFQYISELYGYLAKQFTVFGQHVHIGCPDADSALFLLHSMSRFIPHFIALSASSPYVQNVDTGFHSARLNSVFAFPLSGRAPFVLTWSGFEEYFTKMVNTGVVNSMKDFYWDIRPKPGYGTIEVRVMDTPLSVDRAAAIACYIQTLARYLLIDRPLKLSEDDYLVYTFNRFEACRFGLEGTCVNPQTGERRTIAEDILDTLDRIAPHAAALGSRAALDEIGALAKARVNDASWLRTIFKQEKSLNETVRQQCLRWRE.

It belongs to the glutamate--cysteine ligase type 2 family. YbdK subfamily.

It carries out the reaction L-cysteine + L-glutamate + ATP = gamma-L-glutamyl-L-cysteine + ADP + phosphate + H(+). Its function is as follows. ATP-dependent carboxylate-amine ligase which exhibits weak glutamate--cysteine ligase activity. The polypeptide is Putative glutamate--cysteine ligase 2 (Burkholderia thailandensis (strain ATCC 700388 / DSM 13276 / CCUG 48851 / CIP 106301 / E264)).